A 155-amino-acid polypeptide reads, in one-letter code: Small ribosomal subunit protein uS7 (155 aa).

It belongs to the universal ribosomal protein uS7 family. As to quaternary structure, part of the 30S ribosomal subunit. Contacts proteins S9 and S11.

Its function is as follows. One of the primary rRNA binding proteins, it binds directly to 16S rRNA where it nucleates assembly of the head domain of the 30S subunit. Is located at the subunit interface close to the decoding center, probably blocks exit of the E-site tRNA. The polypeptide is Small ribosomal subunit protein uS7 (Corynebacterium aurimucosum (strain ATCC 700975 / DSM 44827 / CIP 107346 / CN-1) (Corynebacterium nigricans)).